The following is a 164-amino-acid chain: Thioredoxin domain-containing protein R443 (164 aa).

The helical transmembrane segment at 8–28 threads the bilayer; sequence HIVLIVLAIILILWIISLLLC. Residues 36–163 enclose the Thioredoxin domain; it reads YQVPIIQPMQ…LTQFIRSNMN (128 aa). A disulfide bridge connects residues Cys-84 and Cys-87.

Belongs to the thioredoxin family.

The protein localises to the host membrane. The protein resides in the virion. In Acanthamoeba polyphaga mimivirus (APMV), this protein is Thioredoxin domain-containing protein R443.